Reading from the N-terminus, the 331-residue chain is Tryptophan--tRNA ligase (331 aa).

ATP is bound by residues 10–12 (QPS) and 18–19 (GN). The 'HIGH' region motif lies at 11–19 (PSGQLTLGN). Position 133 (aspartate 133) interacts with L-tryptophan. ATP is bound by residues 145–147 (GED), valine 184, and 193–197 (KMSKS). Positions 193–197 (KMSKS) match the 'KMSKS' region motif.

The protein belongs to the class-I aminoacyl-tRNA synthetase family. As to quaternary structure, homodimer.

It is found in the cytoplasm. The catalysed reaction is tRNA(Trp) + L-tryptophan + ATP = L-tryptophyl-tRNA(Trp) + AMP + diphosphate + H(+). Catalyzes the attachment of tryptophan to tRNA(Trp). The sequence is that of Tryptophan--tRNA ligase from Listeria innocua serovar 6a (strain ATCC BAA-680 / CLIP 11262).